The following is a 154-amino-acid chain: Myoglobin (154 aa).

Residues 2–148 form the Globin domain; that stretch reads GLSDGEWQLV…FRNDIAAKYK (147 aa). At Ser4 the chain carries Phosphoserine. His65 lines the nitrite pocket. His65 contacts O2. Thr68 bears the Phosphothreonine mark. Position 94 (His94) interacts with heme b.

Belongs to the globin family. In terms of assembly, monomeric.

It localises to the cytoplasm. The protein localises to the sarcoplasm. The catalysed reaction is Fe(III)-heme b-[protein] + nitric oxide + H2O = Fe(II)-heme b-[protein] + nitrite + 2 H(+). The enzyme catalyses H2O2 + AH2 = A + 2 H2O. In terms of biological role, monomeric heme protein which primary function is to store oxygen and facilitate its diffusion within muscle tissues. Reversibly binds oxygen through a pentacoordinated heme iron and enables its timely and efficient release as needed during periods of heightened demand. Depending on the oxidative conditions of tissues and cells, and in addition to its ability to bind oxygen, it also has a nitrite reductase activity whereby it regulates the production of bioactive nitric oxide. Under stress conditions, like hypoxia and anoxia, it also protects cells against reactive oxygen species thanks to its pseudoperoxidase activity. This chain is Myoglobin (MB), found in Lagostomus maximus (Plains viscacha).